The chain runs to 394 residues: Chorismate synthase (394 aa).

NADP(+) is bound at residue arginine 62. FMN is bound by residues 144-146 (RAS), glycine 307, 322-326 (KPTPT), and arginine 349.

This sequence belongs to the chorismate synthase family. In terms of assembly, homotetramer. It depends on FMNH2 as a cofactor.

The catalysed reaction is 5-O-(1-carboxyvinyl)-3-phosphoshikimate = chorismate + phosphate. It functions in the pathway metabolic intermediate biosynthesis; chorismate biosynthesis; chorismate from D-erythrose 4-phosphate and phosphoenolpyruvate: step 7/7. Functionally, catalyzes the anti-1,4-elimination of the C-3 phosphate and the C-6 proR hydrogen from 5-enolpyruvylshikimate-3-phosphate (EPSP) to yield chorismate, which is the branch point compound that serves as the starting substrate for the three terminal pathways of aromatic amino acid biosynthesis. This reaction introduces a second double bond into the aromatic ring system. The chain is Chorismate synthase from Acetivibrio thermocellus (strain ATCC 27405 / DSM 1237 / JCM 9322 / NBRC 103400 / NCIMB 10682 / NRRL B-4536 / VPI 7372) (Clostridium thermocellum).